Reading from the N-terminus, the 362-residue chain is Flotillin-like protein FloA 2 (362 aa).

Residues 24-44 (TALLIGALVIFAGIVVVLFIF) form a helical membrane-spanning segment.

Belongs to the flotillin-like FloA family. In terms of assembly, homooligomerizes.

The protein localises to the cell membrane. It is found in the membrane raft. In terms of biological role, found in functional membrane microdomains (FMM) that may be equivalent to eukaryotic membrane rafts. FMMs are highly dynamic and increase in number as cells age. Flotillins are thought to be important factors in membrane fluidity. The sequence is that of Flotillin-like protein FloA 2 from Rhodopirellula baltica (strain DSM 10527 / NCIMB 13988 / SH1).